Consider the following 294-residue polypeptide: Lysozyme M1 (294 aa).

Residues Gly81–Ala294 form the Ch-type lysozyme domain. Active-site residues include Asp86, Asp175, and Glu177. A disulfide bridge links Cys185 with Cys224.

The protein belongs to the glycosyl hydrolase 25 family.

Its subcellular location is the secreted. It catalyses the reaction Hydrolysis of (1-&gt;4)-beta-linkages between N-acetylmuramic acid and N-acetyl-D-glucosamine residues in a peptidoglycan and between N-acetyl-D-glucosamine residues in chitodextrins.. In terms of biological role, this enzyme has both lysozyme (acetylmuramidase) and diacetylmuramidase activities. In Streptomyces globisporus, this protein is Lysozyme M1 (acm).